Here is a 485-residue protein sequence, read N- to C-terminus: Aspartyl protease family protein 2 (485 aa).

A signal peptide spans 1–23 (MVGRRKALLFSLCFFFLSLPSFS). The disordered stretch occupies residues 43-71 (PVSFQPDSDSESLLESEFESGSDSESSSS). The span at 50 to 64 (SDSESLLESEFESGS) shows a compositional bias: acidic residues. One can recognise a Peptidase A1 domain in the interval 142–480 (YFTRLGVGTP…DLASSRVGFA (339 aa)). Residues aspartate 160 and aspartate 365 contribute to the active site.

The protein belongs to the peptidase A1 family.

Aspartyl protease. Not able to cleave BAG6. The protein is Aspartyl protease family protein 2 of Arabidopsis thaliana (Mouse-ear cress).